The sequence spans 41 residues: Perlinhibin (41 aa).

Contains four disulfide bonds.

Functionally, binds to calcite crystals in the shell and inhibits further shell growth at the binding site. In Haliotis laevigata (Smooth Australian abalone), this protein is Perlinhibin.